We begin with the raw amino-acid sequence, 220 residues long: Thiamine-phosphate synthase (220 aa).

4-amino-2-methyl-5-(diphosphooxymethyl)pyrimidine contacts are provided by residues 39-43 (QLRDK) and N80. Residues D81 and D100 each contribute to the Mg(2+) site. S119 contributes to the 4-amino-2-methyl-5-(diphosphooxymethyl)pyrimidine binding site. A 2-[(2R,5Z)-2-carboxy-4-methylthiazol-5(2H)-ylidene]ethyl phosphate-binding site is contributed by 145 to 147 (TPT). K148 contacts 4-amino-2-methyl-5-(diphosphooxymethyl)pyrimidine. 2-[(2R,5Z)-2-carboxy-4-methylthiazol-5(2H)-ylidene]ethyl phosphate is bound at residue G176.

Belongs to the thiamine-phosphate synthase family. It depends on Mg(2+) as a cofactor.

It catalyses the reaction 2-[(2R,5Z)-2-carboxy-4-methylthiazol-5(2H)-ylidene]ethyl phosphate + 4-amino-2-methyl-5-(diphosphooxymethyl)pyrimidine + 2 H(+) = thiamine phosphate + CO2 + diphosphate. It carries out the reaction 2-(2-carboxy-4-methylthiazol-5-yl)ethyl phosphate + 4-amino-2-methyl-5-(diphosphooxymethyl)pyrimidine + 2 H(+) = thiamine phosphate + CO2 + diphosphate. The catalysed reaction is 4-methyl-5-(2-phosphooxyethyl)-thiazole + 4-amino-2-methyl-5-(diphosphooxymethyl)pyrimidine + H(+) = thiamine phosphate + diphosphate. Its pathway is cofactor biosynthesis; thiamine diphosphate biosynthesis; thiamine phosphate from 4-amino-2-methyl-5-diphosphomethylpyrimidine and 4-methyl-5-(2-phosphoethyl)-thiazole: step 1/1. Condenses 4-methyl-5-(beta-hydroxyethyl)thiazole monophosphate (THZ-P) and 2-methyl-4-amino-5-hydroxymethyl pyrimidine pyrophosphate (HMP-PP) to form thiamine monophosphate (TMP). The polypeptide is Thiamine-phosphate synthase (Mycobacterium ulcerans (strain Agy99)).